We begin with the raw amino-acid sequence, 295 residues long: 33 kDa chaperonin (295 aa).

2 disulfide bridges follow: Cys237–Cys239 and Cys270–Cys273.

It belongs to the HSP33 family. Under oxidizing conditions two disulfide bonds are formed involving the reactive cysteines. Under reducing conditions zinc is bound to the reactive cysteines and the protein is inactive.

It localises to the cytoplasm. In terms of biological role, redox regulated molecular chaperone. Protects both thermally unfolding and oxidatively damaged proteins from irreversible aggregation. Plays an important role in the bacterial defense system toward oxidative stress. This is 33 kDa chaperonin from Symbiobacterium thermophilum (strain DSM 24528 / JCM 14929 / IAM 14863 / T).